The sequence spans 305 residues: RNA-binding protein rnp-1 (305 aa).

Residues 3-72 (SKLFVGNLPD…KVVNIKKSTS (70 aa)) form the RRM domain. The segment at 84–97 (CFRCQSDEHRTPQC) adopts a CCHC-type zinc-finger fold. The tract at residues 284 to 305 (QQIQHQQATGSPAPVPAPPRLY) is disordered. Pro residues predominate over residues 296-305 (APVPAPPRLY).

Expressed throughout the germline.

Its function is as follows. RNA-binding protein that is required for the germ line to transition from spermatogenesis to oogenesis and allow for normal oocyte development. This is RNA-binding protein rnp-1 from Caenorhabditis elegans.